Here is a 1054-residue protein sequence, read N- to C-terminus: Proteoglycan 4 (1054 aa).

The signal sequence occupies residues 1–24 (MGWKILPVCLSLLLPVVLIQQVSS). SMB domains follow at residues 26–69 (DLSS…PELS) and 66–108 (PELS…EEVH). 14 disulfide bridges follow: cysteine 30–cysteine 34, cysteine 30–cysteine 46, cysteine 34–cysteine 64, cysteine 44–cysteine 46, cysteine 44–cysteine 57, cysteine 50–cysteine 56, cysteine 57–cysteine 64, cysteine 70–cysteine 74, cysteine 70–cysteine 86, cysteine 74–cysteine 104, cysteine 84–cysteine 86, cysteine 84–cysteine 97, cysteine 90–cysteine 96, and cysteine 97–cysteine 104. A glycan (N-linked (GlcNAc...) asparagine) is linked at asparagine 109. Over residues 110–125 (STSPSSKTAPTPAGAS) the composition is skewed to low complexity. A disordered region spans residues 110–764 (STSPSSKTAP…PLIPGPPVLF (655 aa)). Serine 135 is a glycosylation site (O-linked (GalNAc...) serine). Positions 162 to 175 (QESSSSSSSSSSTI) are enriched in low complexity. Basic and acidic residues predominate over residues 188 to 200 (ELQKNPNVKDNKK). Over residues 229 to 238 (TPPPPDPPTT) the composition is skewed to pro residues. Threonine 237 and threonine 250 each carry an O-linked (GalNAc...) threonine glycan. Residues 286–295 (TTATNKQSSA) show a composition bias toward low complexity. O-linked (GalNAc...) threonine glycosylation is present at threonine 301. An O-linked (GalNAc...) serine glycan is attached at serine 302. Positions 302-318 (SVKETRSAEKTSDKDVE) are enriched in basic and acidic residues. A glycan (O-linked (GalNAc...) threonine) is linked at threonine 306. A glycan (O-linked (GalNAc...) serine) is linked at serine 313. A 1; approximate repeat occupies 317 to 324 (VEPTSTTP). A 37 X 8 AA repeats of K-X-P-X-P-T-T-X region spans residues 317–618 (VEPTSTTPKN…TPKKPEPTTT (302 aa)). Residues 319-328 (PTSTTPKNSA) show a composition bias toward polar residues. Residues 325–332 (KNSAPTTT) form a 2; approximate repeat. Residue serine 327 is glycosylated (O-linked (GalNAc...) serine). Residues 329 to 339 (PTTTKKPVTTT) are compositionally biased toward low complexity. 11 O-linked (GalNAc...) threonine glycosylation sites follow: threonine 330, threonine 338, threonine 354, threonine 362, threonine 369, threonine 377, threonine 378, threonine 385, threonine 386, threonine 393, and threonine 394. One copy of the 3; approximate repeat lies at 333–340 (KKPVTTTK). One copy of the 4; approximate repeat lies at 349-356 (QEPEPTTA). Repeat unit 5 spans residues 357-364 (KEPPPTTK). Positions 364–399 (KKPEPTTRKEPEPTTPKEPEPTTPKEPEPTTPKEPE) are enriched in basic and acidic residues. The stretch at 365 to 371 (KPEPTTR) is one 6; approximate repeat. Repeat copies occupy residues 372-379 (KEPEPTTP), 380-387 (KEPEPTTP), 388-395 (KEPEPTTP), 396-403 (KEPEPTTP), and 404-411 (KEPPPTTK). Over residues 400–426 (PTTPKEPPPTTKKPEPTTPKEPGPTTP) the composition is skewed to pro residues. The 12; approximate repeat unit spans residues 412–418 (KPEPTTP). O-linked (GalNAc...) threonine glycosylation is found at threonine 416, threonine 417, threonine 424, threonine 432, threonine 433, threonine 440, threonine 441, and threonine 448. 3 consecutive repeat copies span residues 419–426 (KEPGPTTP), 427–434 (KEPEPTTT), and 435–442 (KEPEPTTT). Positions 427-550 (KEPEPTTTKE…PEPTTPKKPE (124 aa)) are enriched in basic and acidic residues. One copy of the 16; approximate repeat lies at 443-450 (KEPESTTR). Repeat copies occupy residues 451 to 458 (KEPEPTTP), 459 to 466 (KEPEPTTP), 467 to 474 (KEPEPTTL), 475 to 482 (KEPEPTTP), 483 to 490 (KEPEPTTP), 491 to 498 (KEPEPTTP), 499 to 506 (KEPEPTTP), 507 to 514 (KEPEPTTP), 515 to 522 (KEPEPTTP), 523 to 530 (KEPEPTTP), 531 to 538 (KEPEPTTP), 539 to 546 (KEPEPTTP), 547 to 554 (KKPEPTTP), 555 to 562 (KEPVPTTP), 563 to 570 (KEPEPTTP), 571 to 578 (KEPEPTTP), 579 to 586 (KEPEPTTR), 587 to 594 (KEPEPTTP), 595 to 602 (KEPEPTTP), 603 to 610 (KEPEPTTP), and 611 to 618 (KKPEPTTT). Residues threonine 472, threonine 480, threonine 481, threonine 488, threonine 489, threonine 496, threonine 497, threonine 504, threonine 505, threonine 512, threonine 520, threonine 521, threonine 528, and threonine 529 are each glycosylated (O-linked (GalNAc...) threonine). Over residues 551–562 (PTTPKEPVPTTP) the composition is skewed to pro residues. O-linked (GalNAc...) threonine glycosylation is found at threonine 553, threonine 560, threonine 561, threonine 568, threonine 569, threonine 576, and threonine 577. Positions 563–614 (KEPEPTTPKEPEPTTPKEPEPTTRKEPEPTTPKEPEPTTPKEPEPTTPKKPE) are enriched in basic and acidic residues. Threonine 592, threonine 600, and threonine 601 each carry an O-linked (GalNAc...) threonine glycan. Over residues 615–624 (PTTTSPKTTT) the composition is skewed to low complexity. O-linked (GalNAc...) threonine glycosylation is found at threonine 622, threonine 624, threonine 628, threonine 629, and threonine 692. The segment covering 672-699 (KPTKKPTKAPKKPTSTKKPKTPKTRKPK) has biased composition (basic residues). Low complexity predominate over residues 700–712 (TTPSPLKTTSATP). Residues 713–735 (ELNTTPLEVMLPTTTIPKQTPNP) show a composition bias toward polar residues. A disulfide bridge connects residues cysteine 795 and cysteine 1053. Hemopexin repeat units follow at residues 797–840 (GKPV…VWGI) and 841–888 (PSPI…FGGL). Residue asparagine 808 is glycosylated (N-linked (GlcNAc...) asparagine). The O-linked (GalNAc...) threonine glycan is linked to threonine 810. Residue asparagine 938 is glycosylated (N-linked (GlcNAc...) asparagine).

In terms of assembly, homodimer; disulfide-linked. N-glycosylated. In terms of processing, O-glycosylated; contains glycosaminoglycan chondroitin sulfate and keratan sulfate. O-glycosylated with sialylated oligosaccharides which are predominantly represented by the monosialylated core type I structure, NeuNAcalpha2-3Galbeta1-3GalNAc, with smaller amounts of disialylated O-glycans. Post-translationally, the disulfide bond between Cys-795 and Cys-1053 is essential for protein cleavage. Proteolytically cleaved by cathepsin CTSG. Highly expressed in cartilage, bone and liver and weakly expressed in heart, brain and muscle. Expressed in the surface chondrocytes and in synovial intimal cells. Isoform B is expressed in bone, small intestine, muscle, testis, heart, liver and lung. Isoform C and isoform D are widely expressed.

The protein localises to the secreted. Plays a role in boundary lubrication within articulating joints. Prevents protein deposition onto cartilage from synovial fluid by controlling adhesion-dependent synovial growth and inhibiting the adhesion of synovial cells to the cartilage surface. This Mus musculus (Mouse) protein is Proteoglycan 4 (Prg4).